The primary structure comprises 88 residues: Small ribosomal subunit protein uS17 (88 aa).

The protein belongs to the universal ribosomal protein uS17 family. Part of the 30S ribosomal subunit.

Its function is as follows. One of the primary rRNA binding proteins, it binds specifically to the 5'-end of 16S ribosomal RNA. The protein is Small ribosomal subunit protein uS17 of Pseudomonas fluorescens (strain ATCC BAA-477 / NRRL B-23932 / Pf-5).